Here is a 370-residue protein sequence, read N- to C-terminus: MEGLKVTPLRGVYEEYGGKIVDFAGYELPTQFKGFLHEHHTVREKAGLFDVSHMGEAMVTGKDAGKFIQYLMTNDINVLKDNEVLYTFMCNEDGGVIDDLLVYKFAEDEFFLVINASNKDKDVKWIMDHKGDFDVEIADVSDSIAQLALQGPLAEEILQKIVDVDLQEIKFFKLRRDVLVDGKKCLVSRTGYTGEDGFEIYCKPEDAKGLWHAILNAGKEEGAQPIGLGARDTLRFEASLLLYGNEMDETITPLEVGMGFFVKLKVEEDFIGKDALIKQKAEGVTRKLVGFELIDKGIPRHGYEVIKDGKVIGHVTTGYKSPTLNKAIGLALVEEQYSKIGTEFNIKVRKKELKAVAIDKRFYTKKTKTK.

It belongs to the GcvT family. In terms of assembly, the glycine cleavage system is composed of four proteins: P, T, L and H.

It carries out the reaction N(6)-[(R)-S(8)-aminomethyldihydrolipoyl]-L-lysyl-[protein] + (6S)-5,6,7,8-tetrahydrofolate = N(6)-[(R)-dihydrolipoyl]-L-lysyl-[protein] + (6R)-5,10-methylene-5,6,7,8-tetrahydrofolate + NH4(+). In terms of biological role, the glycine cleavage system catalyzes the degradation of glycine. This is Aminomethyltransferase from Clostridium botulinum (strain Loch Maree / Type A3).